The chain runs to 303 residues: MADDQNCAPELEKADPSGEDGVDAKPDRSSIISSILGKKKKNASACPVKTARDRVPTYLYRMDFEKMGKCIIINNKNFDKVTGMDVRNGTDKDAEALFKCFRSLGFDVVVYNDCSCAKMQDLLRKASEEDHSNSACFACVLLSHGEENLIYGKDGVTPIKDLTAHFRGDRCKTLLEKPKLFFIQACRGTELDDGVQADSGPINETDANPRYKIPVEADFLFAYSTVPGYYSWRNPGKGSWFVQALCSILDEHGKDLEIMQILTRVNDRVARHFESQCDDPCFNEKKQIPCMVSMLTKELYFGR.

The segment at 1 to 27 (MADDQNCAPELEKADPSGEDGVDAKPD) is disordered. A2 carries the N-acetylalanine modification. Residues 2–23 (ADDQNCAPELEKADPSGEDGVD) constitute a propeptide, N-terminally processed. Over residues 10–27 (ELEKADPSGEDGVDAKPD) the composition is skewed to basic and acidic residues. S30 is modified (phosphoserine). Residues 38–41 (KKKK) are exosite. The segment at 76–87 (KNFDKVTGMDVR) is loop L1. H144 is an active-site residue. At T173 the chain carries Phosphothreonine. C186 is an active-site residue. Positions 187 to 196 (RGTELDDGVQ) are loop L2. The propeptide occupies 199 to 206 (SGPINETD). Residues 226 to 238 (VPGYYSWRNPGKG) form a loop L3 region. A Phosphoserine modification is found at S239. Residues 274 to 288 (ESQCDDPCFNEKKQI) form a loop L4 region.

It belongs to the peptidase C14A family. In terms of assembly, heterotetramer that consists of two anti-parallel arranged heterodimers, each one formed by a 20 kDa (p20) and a 11 kDa (p11) subunit. Interacts with XIAP (via its second BIR domain); inhibiting CASP7 activity. Interacts with BIRC6/bruce. Interacts with ATXN3 (short isoform 1). Interacts with HSPA5. Post-translationally, cleavage by different proteases, such as granzyme B (GZMB), caspase-1 (CASP1), caspase-8 (CASP8) or caspase-9 (CASP9) generate the two active subunits. Its involvement in different programmed cell death processes is probably specified by the protease that activates CASP7. Cleaved and activated by initiator caspases (CASP8 and/or CASP9), leading to execution phase of apoptosis. Cleavage and maturation by GZMB regulates granzyme-mediated programmed cell death. Cleaved and activated by CASP1 in response to bacterial infection. Propeptide domains can also be cleaved efficiently by CASP3. Active heterodimers between the small subunit of caspase-7 and the large subunit of CASP3, and vice versa, also occur. Also cleaved at the N-terminus at alternative sites by CAPN1, leading to its activation. Phosphorylation at Ser-30 and Ser-239 by PAK2 inhibits its activity. Phosphorylation at Ser-30 prevents cleavage and activation by initiator caspase CASP9, while phosphorylation at Ser-239 prevents thiol protease activity by preventing substrate-binding. In terms of processing, ubiquitinated by BIRC6; this activity is inhibited by DIABLO/SMAC.

It is found in the cytoplasm. The protein localises to the cytosol. Its subcellular location is the nucleus. The protein resides in the secreted. It localises to the extracellular space. It catalyses the reaction Strict requirement for an Asp residue at position P1 and has a preferred cleavage sequence of Asp-Glu-Val-Asp-|-.. Its activity is regulated as follows. During activation, the N-terminal disordered prodomain is removed by cleavage. Concomitantly, double cleavage gives rise to a large Caspase-7 subunit p20 and a small Caspase-7 subunit p11. The two large and two small subunits then assemble to form the active CASP7 complex. Can be cleaved and activated by different caspases, depending on the context. Cleaved and activated by initiator caspases (CASP8 and/or CASP9), leading to execution phase of apoptosis. Cleavage and maturation by GZMB regulates granzyme-mediated programmed cell death. Cleavage and maturation by CASP1 regulates pyroptosis. Inhibited by XIAP, which directly binds to the active site pocket and obstructs substrate entry. Phosphorylation at Ser-30 and Ser-239 by PAK2 inhibits its activity. Inhibited by BIRC6; following inhibition of BIRC6-caspase binding by DIABLO/SMAC, BIRC6 is subjected to caspase cleavage, leading to an increase in active caspases. In terms of biological role, thiol protease involved in different programmed cell death processes, such as apoptosis, pyroptosis or granzyme-mediated programmed cell death, by proteolytically cleaving target proteins. Has a marked preference for Asp-Glu-Val-Asp (DEVD) consensus sequences, with some plasticity for alternate non-canonical sequences. Its involvement in the different programmed cell death processes is probably determined by upstream proteases that activate CASP7. Acts as an effector caspase involved in the execution phase of apoptosis: following cleavage and activation by initiator caspases (CASP8 and/or CASP9), mediates execution of apoptosis by catalyzing cleavage of proteins, such as CLSPN, PARP1, PTGES3 and YY1. Compared to CASP3, acts as a minor executioner caspase and cleaves a limited set of target proteins. Acts as a key regulator of the inflammatory response in response to bacterial infection by catalyzing cleavage and activation of the sphingomyelin phosphodiesterase SMPD1 in the extracellular milieu, thereby promoting membrane repair. Regulates pyroptosis in intestinal epithelial cells: cleaved and activated by CASP1 in response to S.typhimurium infection, promoting its secretion to the extracellular milieu, where it catalyzes activation of SMPD1, generating ceramides that repair membranes and counteract the action of gasdermin-D (GSDMD) pores. Regulates granzyme-mediated programmed cell death in hepatocytes: cleaved and activated by granzyme B (GZMB) in response to bacterial infection, promoting its secretion to the extracellular milieu, where it catalyzes activation of SMPD1, generating ceramides that repair membranes and counteract the action of perforin (PRF1) pores. Following cleavage by CASP1 in response to inflammasome activation, catalyzes processing and inactivation of PARP1, alleviating the transcription repressor activity of PARP1. Acts as an inhibitor of type I interferon production during virus-induced apoptosis by mediating cleavage of antiviral proteins CGAS, IRF3 and MAVS, thereby preventing cytokine overproduction. Cleaves and activates sterol regulatory element binding proteins (SREBPs). Cleaves phospholipid scramblase proteins XKR4, XKR8 and XKR9. Cleaves BIRC6 following inhibition of BIRC6-caspase binding by DIABLO/SMAC. The protein is Caspase-7 (CASP7) of Mesocricetus auratus (Golden hamster).